Reading from the N-terminus, the 275-residue chain is 3-methyl-2-oxobutanoate hydroxymethyltransferase (275 aa).

Mg(2+) is bound by residues Asp-49 and Asp-88. 3-methyl-2-oxobutanoate is bound by residues 49 to 50 (DS), Asp-88, and Lys-118. Glu-120 serves as a coordination point for Mg(2+). Glu-187 functions as the Proton acceptor in the catalytic mechanism.

This sequence belongs to the PanB family. In terms of assembly, homodecamer; pentamer of dimers. Mg(2+) serves as cofactor.

The protein localises to the cytoplasm. It carries out the reaction 3-methyl-2-oxobutanoate + (6R)-5,10-methylene-5,6,7,8-tetrahydrofolate + H2O = 2-dehydropantoate + (6S)-5,6,7,8-tetrahydrofolate. The protein operates within cofactor biosynthesis; (R)-pantothenate biosynthesis; (R)-pantoate from 3-methyl-2-oxobutanoate: step 1/2. In terms of biological role, catalyzes the reversible reaction in which hydroxymethyl group from 5,10-methylenetetrahydrofolate is transferred onto alpha-ketoisovalerate to form ketopantoate. In Bartonella henselae (strain ATCC 49882 / DSM 28221 / CCUG 30454 / Houston 1) (Rochalimaea henselae), this protein is 3-methyl-2-oxobutanoate hydroxymethyltransferase.